The primary structure comprises 148 residues: Protein ADM2 (148 aa).

Residues 1–24 (MARIPTAALGCISLLCLQLPGSLS) form the signal peptide. A propeptide spanning residues 25 to 98 (RSLGGDPRPV…HSGPRRHSGP (74 aa)) is cleaved from the precursor. Disordered stretches follow at residues 26-57 (SLGG…APRP) and 70-101 (RGAG…PRRT). Cys110 and Cys115 are oxidised to a cystine. Tyrosine amide is present on Tyr147.

It belongs to the adrenomedullin family. As to expression, expressed in the esophagus, stomach, jejunum, ileum, ileocecum, ascending colon, transverse colon, descending colon and rectum. Expressed in myocardial cells of the heart, renal tubular cells, hypothalamus, and pituitary.

The protein resides in the secreted. Functionally, intermedin/ADM2 is a peptide hormone that plays a role as physiological regulator of gastrointestinal and cardiovascular bioactivities mediated by the CALCRL-RAMPs receptor complexes. Activates the cAMP-dependent pathway through interaction with CALCRL-RAMP3 receptor complex. In Homo sapiens (Human), this protein is Protein ADM2.